The primary structure comprises 234 residues: dTDP-4-amino-4,6-dideoxyglucose formyltransferase (234 aa).

DTDP-4-amino-4,6-dideoxy-alpha-D-glucose contacts are provided by residues asparagine 9 and 62–64 (HCK). 65 to 67 (QRF) serves as a coordination point for (6R)-10-formyltetrahydrofolate. The active-site Proton acceptor is histidine 81. A dTDP-4-amino-4,6-dideoxy-alpha-D-glucose-binding site is contributed by 90–94 (GWFPQ). The (6R)-10-formyltetrahydrofolate site is built by aspartate 112, aspartate 116, and lysine 175. Residue asparagine 209 coordinates dTDP-4-amino-4,6-dideoxy-alpha-D-glucose.

Belongs to the dTDP-Qui4N formyltransferase family. Homodimer.

It carries out the reaction dTDP-4-amino-4,6-dideoxy-alpha-D-glucose + (6R)-10-formyltetrahydrofolate = dTDP-4-formamido-4,6-dideoxy-alpha-D-glucose + (6S)-5,6,7,8-tetrahydrofolate + H(+). In terms of biological role, sugar N-formyltransferase that catalyzes the conversion of dTDP-4-amino-4,6-dideoxyglucose into dTDP-4-formamido-4,6-dideoxyglucose using N(10)-formyltetrahydrofolate as the carbon source. Plays a role in virulence. The chain is dTDP-4-amino-4,6-dideoxyglucose formyltransferase from Mycobacterium bovis (strain ATCC BAA-935 / AF2122/97).